A 942-amino-acid polypeptide reads, in one-letter code: Homeobox protein 2 (942 aa).

Composition is skewed to low complexity over residues 32–87 (ECNE…NINE) and 98–130 (SPYSSPSSSISSPSRSPSPNSPASSSPIHSPIP). Disordered stretches follow at residues 32–149 (ECNE…PQNI), 161–494 (LESP…RLKK), 537–580 (RQEK…QGGA), and 609–942 (FKNN…CQQN). Over residues 131–149 (NTNFKQSGEYQSIPSPQNI) the composition is skewed to polar residues. Residues 163-261 (SPNSSNSSPS…PSSNLSKSNS (99 aa)) show a composition bias toward low complexity. Residues 269–290 (QAPSNTSSPQLLSPNHNQQRIS) are compositionally biased toward polar residues. 2 stretches are compositionally biased toward low complexity: residues 299-430 (NNNH…NSSP) and 450-464 (NNNNNNNNNNNSNSS). Polar residues predominate over residues 465 to 481 (FDEYQPQQKVSRSNSPN). Residues 485–544 (EKKRRTRLKKEQADILKTFFDNDDYPTKDDKETLANRLGMSYCAVTTWFSNKRQEKKRRG) constitute a DNA-binding region (homeobox). Composition is skewed to low complexity over residues 609–621 (FKNNNMDNNNKNV), 628–685 (NNNN…GSSD), 694–737 (NNNN…NNNN), 752–764 (NNNNNNNNNNNNN), 776–864 (SDDT…YLNN), and 890–927 (NNFNGDNNNNNNNKNNNNNNQNNNGNGNNNNNNNNDNN). Residues 835 to 865 (NNNNNNNNQNNNNNNNNNQYNNNNKNYLNNI) are a coiled coil.

The protein resides in the nucleus. Its function is as follows. Putative transcription factor that may potentiate the function of warA. This Dictyostelium discoideum (Social amoeba) protein is Homeobox protein 2 (hbx2).